The sequence spans 20 residues: ATP synthase subunit beta, chloroplastic (20 aa).

A compositionally biased stretch (polar residues) spans 1 to 10; the sequence is METTNESLGY. The interval 1 to 20 is disordered; it reads METTNESLGYTDQIIGPVLD.

Belongs to the ATPase alpha/beta chains family. In terms of assembly, F-type ATPases have 2 components, CF(1) - the catalytic core - and CF(0) - the membrane proton channel. CF(1) has five subunits: alpha(3), beta(3), gamma(1), delta(1), epsilon(1). CF(0) has four main subunits: a(1), b(1), b'(1) and c(9-12).

It is found in the plastid. The protein resides in the chloroplast thylakoid membrane. It carries out the reaction ATP + H2O + 4 H(+)(in) = ADP + phosphate + 5 H(+)(out). Functionally, produces ATP from ADP in the presence of a proton gradient across the membrane. The catalytic sites are hosted primarily by the beta subunits. The polypeptide is ATP synthase subunit beta, chloroplastic (Chattonella marina var. antiqua (Red tide flagellate)).